Consider the following 58-residue polypeptide: Small ribosomal subunit protein bS21 (58 aa).

The segment at S25 to F58 is disordered. Residues E32–S43 show a composition bias toward basic and acidic residues. The segment covering V44–F58 has biased composition (basic residues).

Belongs to the bacterial ribosomal protein bS21 family.

This is Small ribosomal subunit protein bS21 from Oceanobacillus iheyensis (strain DSM 14371 / CIP 107618 / JCM 11309 / KCTC 3954 / HTE831).